The sequence spans 297 residues: TGF-beta receptor type-2 (297 aa).

The first 23 residues, 1-23 (MGRGLLGGLWPLHVVLWTRIAST), serve as a signal peptide directing secretion. Over 24–166 (IPPHVPKSVN…NPDLLLVIFQ (143 aa)) the chain is Extracellular. 6 disulfide bridges follow: Cys51/Cys84, Cys54/Cys71, Cys61/Cys67, Cys77/Cys101, Cys121/Cys136, and Cys138/Cys143. 2 N-linked (GlcNAc...) asparagine glycosylation sites follow: Asn70 and Asn94. A helical transmembrane segment spans residues 167-187 (VTGVSLLPPLGIAIAVIITFY). Over 188 to 297 (CYRVHRQQKL…KTEKDIFSDL (110 aa)) the chain is Cytoplasmic. Residues 244-297 (IELDTLVGKGRFAEVYKAKLRQNTSEQFETVAVKIFPYEEYASWKTEKDIFSDL) enclose the Protein kinase domain. Residues 250–258 (VGKGRFAEV) and Lys277 contribute to the ATP site.

Belongs to the protein kinase superfamily. TKL Ser/Thr protein kinase family. TGFB receptor subfamily. In terms of assembly, homodimer. Heterohexamer; TGFB1, TGFB2 and TGFB3 homodimeric ligands assemble a functional receptor composed of two TGFBR1 and TGFBR2 heterodimers to form a ligand-receptor heterohexamer. The respective affinity of TGFRB1 and TGFRB2 for the ligands may modulate the kinetics of assembly of the receptor and may explain the different biological activities of TGFB1, TGFB2 and TGFB3. Component of a complex composed of TSC22D1 (via N-terminus), TGFBR1 and TGFBR2; the interaction between TSC22D1 and TGFBR1 is inhibited by SMAD7 and promoted by TGFB1. Interacts with DAXX. Interacts with DYNLT4. Interacts with ZFYVE9; ZFYVE9 recruits SMAD2 and SMAD3 to the TGF-beta receptor. Interacts with and is activated by SCUBE3; this interaction does not affect TGFB1-binding to TGFBR2. Interacts with VPS39; this interaction is independent of the receptor kinase activity and of the presence of TGF-beta. Interacts with CLU. Mg(2+) is required as a cofactor. Requires Mn(2+) as cofactor. Phosphorylated on a Ser/Thr residue in the cytoplasmic domain.

Its subcellular location is the cell membrane. It localises to the membrane raft. The catalysed reaction is L-threonyl-[receptor-protein] + ATP = O-phospho-L-threonyl-[receptor-protein] + ADP + H(+). It carries out the reaction L-seryl-[receptor-protein] + ATP = O-phospho-L-seryl-[receptor-protein] + ADP + H(+). Transmembrane serine/threonine kinase forming with the TGF-beta type I serine/threonine kinase receptor, TGFBR1, the non-promiscuous receptor for the TGF-beta cytokines TGFB1, TGFB2 and TGFB3. Transduces the TGFB1, TGFB2 and TGFB3 signal from the cell surface to the cytoplasm and is thus regulating a plethora of physiological and pathological processes including cell cycle arrest in epithelial and hematopoietic cells, control of mesenchymal cell proliferation and differentiation, wound healing, extracellular matrix production, immunosuppression and carcinogenesis. The formation of the receptor complex composed of 2 TGFBR1 and 2 TGFBR2 molecules symmetrically bound to the cytokine dimer results in the phosphorylation and the activation of TGFRB1 by the constitutively active TGFBR2. Activated TGFBR1 phosphorylates SMAD2 which dissociates from the receptor and interacts with SMAD4. The SMAD2-SMAD4 complex is subsequently translocated to the nucleus where it modulates the transcription of the TGF-beta-regulated genes. This constitutes the canonical SMAD-dependent TGF-beta signaling cascade. Also involved in non-canonical, SMAD-independent TGF-beta signaling pathways. This Sus scrofa (Pig) protein is TGF-beta receptor type-2 (TGFBR2).